We begin with the raw amino-acid sequence, 193 residues long: uncharacterized protein (193 aa).

One can recognise an AMMECR1 domain in the interval 1–189 (MDKKEYCYYC…CTYEEYLHNL (189 aa)).

This is an uncharacterized protein from Schizosaccharomyces pombe (strain 972 / ATCC 24843) (Fission yeast).